A 277-amino-acid polypeptide reads, in one-letter code: UPF0496 protein At3g48650 (277 aa).

Helical transmembrane passes span 124 to 144 and 145 to 165; these read YIFFAAALLSVLALWIYLGAV and SLVVAAKVVIEVATPSIAPLW.

The protein belongs to the UPF0496 family.

The protein localises to the membrane. This Arabidopsis thaliana (Mouse-ear cress) protein is UPF0496 protein At3g48650.